We begin with the raw amino-acid sequence, 402 residues long: MLSEKTIEIVKSTVPLLQEKGVEITTRFYEILFSEHPELLNIFNHTNQKKGRQQQALANAVYAAATYIDNLEAIIPVVKQIGHKHRSLGIKAEHYPIVGTCLLRAIKEVAGAPDEVLNAWGEAYGVIADAFISIEAEMYEEAAHKEGGWKDFRNFVVVKKVKESDVITSLYLKPEDGGKVSSFIPGQYVTVQINIEGETYTHNRQYSLSDAPGKEYYRISVKKEKGVDTPDGKVSNYLHDHVKEGDMLPVSAPAGDFVLNMDSTLPVVLISGGVGITPMMSMLNTLIEQDSKRNVCFVHAAINSNTHAMKEHVEAVDNEYEQVKAYTCYSAPTEKDLEMKNFDKEGFVEREWLQTIIPTTEAEFYFCGPVPFMKHINAVLTDLGVKQEHIHYEFFGPAASLQ.

In terms of domain architecture, Globin spans 1 to 136; it reads MLSEKTIEIV…IADAFISIEA (136 aa). A heme b-binding site is contributed by His-85. Residues Tyr-95 and Glu-135 each act as charge relay system in the active site. The segment at 147-402 is reductase; it reads GGWKDFRNFV…EFFGPAASLQ (256 aa). In terms of domain architecture, FAD-binding FR-type spans 150 to 260; the sequence is KDFRNFVVVK…SAPAGDFVLN (111 aa). FAD contacts are provided by residues Tyr-188 and 204-207; that span reads RQYS. 273–278 contributes to the NADP(+) binding site; the sequence is GVGITP. 394 to 397 is an FAD binding site; sequence FFGP.

This sequence belongs to the globin family. Two-domain flavohemoproteins subfamily. It in the C-terminal section; belongs to the flavoprotein pyridine nucleotide cytochrome reductase family. Requires heme b as cofactor. The cofactor is FAD.

It carries out the reaction 2 nitric oxide + NADPH + 2 O2 = 2 nitrate + NADP(+) + H(+). It catalyses the reaction 2 nitric oxide + NADH + 2 O2 = 2 nitrate + NAD(+) + H(+). Is involved in NO detoxification in an aerobic process, termed nitric oxide dioxygenase (NOD) reaction that utilizes O(2) and NAD(P)H to convert NO to nitrate, which protects the bacterium from various noxious nitrogen compounds. Therefore, plays a central role in the inducible response to nitrosative stress. The protein is Flavohemoprotein of Bacillus anthracis.